Consider the following 586-residue polypeptide: MTLLNKSIRYYVDFDQWGINAFNSNPIETTKGFNEALIYASENNFPIVEVPKGNFIIDSVNTLNQRNPEIGGGIKIPSNMELLLDPEAVFQVNPNGYQGYSCFYIGLAENVIIRGGRIIGDRYQHDYSLIDTDRKTHEWGFGIHVHGSKNVLIENVQISDCIGDNIWIAAHGMMNYPGMVYTPSKSVTVRKCELKRGRRNNLATNGCEGLLVEDCDIEEAGGDTIGPQLGIDLEGYGENGRKYDHPYELTISDCRFRKNGRGSVTAHTSGKVSIKDNYCDNVISYGYSTDVSIKGNKIINEGGSKEYGIDSVGVSSTETGNRIQITDNNIQGFKIGMMIRGKGVSIDNNTVKNASNCAIATHMAEDVSISNNRIQDSDCIQIQVRNSSDIKVSNNKGKGTTSAYAIKVMDSNDVKFLNNTFSNLYGGLYCERSQAVRIKLNDFLLSGKGYGIYWDKDSEVFLTRNEIFEPRNVAIMGAADMYNIRISDNQIYNCKAIIAIHLIGGSEHMVRGNEIMFNRDSDQGYGIYLNGTKKVRLIRNDVQGIGARVLSHPFATFNASSTTLIHNTYDSGTPRLALDDTVIDYK.

13 PbH1 repeats span residues 108-147, 148-170, 184-206, 207-235, 246-268, 288-313, 320-341, 364-384, 387-410, 411-432, 435-456, 481-504, and 505-531; these read AENVIIRGGRIIGDRYQHDYSLIDTDRKTHEWGFGIHVHG, SKNVLIENVQISDCIGDNIWIAA, SKSVTVRKCELKRGRRNNLATNG, CEGLLVEDCDIEEAGGDTIGPQLGIDLEG, PYELTISDCRFRKNGRGSVTAHT, STDVSIKGNKIINEGGSKEYGIDSVG, GNRIQITDNNIQGFKIGMMIRG, AEDVSISNNRIQDSDCIQIQV, SSDIKVSNNKGKGTTSAYAIKVMD, SNDVKFLNNTFSNLYGGLYCER, AVRIKLNDFLLSGKGYGIYWDK, MYNIRISDNQIYNCKAIIAIHLIG, and GSEHMVRGNEIMFNRDSDQGYGIYLNG.

This chain is SPbeta prophage-derived uncharacterized protein YorA (yorA), found in Bacillus subtilis (strain 168).